The primary structure comprises 405 residues: L-rhamnonate dehydratase (405 aa).

The substrate site is built by H33 and R59. Residues D226, E252, and E280 each coordinate Mg(2+). H329 (proton acceptor) is an active-site residue. E349 lines the substrate pocket.

This sequence belongs to the mandelate racemase/muconate lactonizing enzyme family. RhamD subfamily. In terms of assembly, homooctamer; tetramer of dimers. Mg(2+) serves as cofactor.

It carries out the reaction L-rhamnonate = 2-dehydro-3-deoxy-L-rhamnonate + H2O. In terms of biological role, catalyzes the dehydration of L-rhamnonate to 2-keto-3-deoxy-L-rhamnonate (KDR). The polypeptide is L-rhamnonate dehydratase (Salmonella typhi).